Reading from the N-terminus, the 227-residue chain is Enolase-phosphatase E1 (227 aa).

The protein belongs to the HAD-like hydrolase superfamily. MasA/MtnC family. In terms of assembly, monomer. Requires Mg(2+) as cofactor.

The catalysed reaction is 5-methylsulfanyl-2,3-dioxopentyl phosphate + H2O = 1,2-dihydroxy-5-(methylsulfanyl)pent-1-en-3-one + phosphate. The protein operates within amino-acid biosynthesis; L-methionine biosynthesis via salvage pathway; L-methionine from S-methyl-5-thio-alpha-D-ribose 1-phosphate: step 3/6. It participates in amino-acid biosynthesis; L-methionine biosynthesis via salvage pathway; L-methionine from S-methyl-5-thio-alpha-D-ribose 1-phosphate: step 4/6. Its function is as follows. Bifunctional enzyme that catalyzes the enolization of 2,3-diketo-5-methylthiopentyl-1-phosphate (DK-MTP-1-P) into the intermediate 2-hydroxy-3-keto-5-methylthiopentenyl-1-phosphate (HK-MTPenyl-1-P), which is then dephosphorylated to form the acireductone 1,2-dihydroxy-3-keto-5-methylthiopentene (DHK-MTPene). The polypeptide is Enolase-phosphatase E1 (Methylococcus capsulatus (strain ATCC 33009 / NCIMB 11132 / Bath)).